The primary structure comprises 122 residues: Large ribosomal subunit protein uL14 (122 aa).

This sequence belongs to the universal ribosomal protein uL14 family. As to quaternary structure, part of the 50S ribosomal subunit. Forms a cluster with proteins L3 and L19. In the 70S ribosome, L14 and L19 interact and together make contacts with the 16S rRNA in bridges B5 and B8.

Functionally, binds to 23S rRNA. Forms part of two intersubunit bridges in the 70S ribosome. In Granulibacter bethesdensis (strain ATCC BAA-1260 / CGDNIH1), this protein is Large ribosomal subunit protein uL14.